We begin with the raw amino-acid sequence, 259 residues long: UPF0246 protein PSPTO_1244 (259 aa).

Belongs to the UPF0246 family.

In Pseudomonas syringae pv. tomato (strain ATCC BAA-871 / DC3000), this protein is UPF0246 protein PSPTO_1244.